We begin with the raw amino-acid sequence, 365 residues long: Cobalt-precorrin-5B C(1)-methyltransferase (365 aa).

Belongs to the CbiD family.

The enzyme catalyses Co-precorrin-5B + S-adenosyl-L-methionine = Co-precorrin-6A + S-adenosyl-L-homocysteine. The protein operates within cofactor biosynthesis; adenosylcobalamin biosynthesis; cob(II)yrinate a,c-diamide from sirohydrochlorin (anaerobic route): step 6/10. Catalyzes the methylation of C-1 in cobalt-precorrin-5B to form cobalt-precorrin-6A. The sequence is that of Cobalt-precorrin-5B C(1)-methyltransferase from Clostridium perfringens (strain 13 / Type A).